The sequence spans 276 residues: Hemin import ATP-binding protein HmuV (276 aa).

The ABC transporter domain maps to 2 to 259 (LTAHHLDVAR…AHIAQCYGFA (258 aa)). 34-41 (GRNGAGKS) is an ATP binding site.

The protein belongs to the ABC transporter superfamily. Heme (hemin) importer (TC 3.A.1.14.5) family. In terms of assembly, the complex is composed of two ATP-binding proteins (HmuV), two transmembrane proteins (HmuU) and a solute-binding protein (HmuT).

Its subcellular location is the cell inner membrane. Its function is as follows. Part of the ABC transporter complex HmuTUV involved in hemin import. Responsible for energy coupling to the transport system. The polypeptide is Hemin import ATP-binding protein HmuV (Burkholderia cenocepacia (strain HI2424)).